Reading from the N-terminus, the 78-residue chain is Acyl carrier protein 1 (78 aa).

Residues 2-77 (STIEERVKKI…EAIDYIVAHQ (76 aa)) enclose the Carrier domain. Ser37 is subject to O-(pantetheine 4'-phosphoryl)serine.

It belongs to the acyl carrier protein (ACP) family. Post-translationally, 4'-phosphopantetheine is transferred from CoA to a specific serine of apo-ACP by AcpS. This modification is essential for activity because fatty acids are bound in thioester linkage to the sulfhydryl of the prosthetic group.

It localises to the cytoplasm. It participates in lipid metabolism; fatty acid biosynthesis. Carrier of the growing fatty acid chain in fatty acid biosynthesis. The polypeptide is Acyl carrier protein 1 (Pseudomonas aeruginosa (strain ATCC 15692 / DSM 22644 / CIP 104116 / JCM 14847 / LMG 12228 / 1C / PRS 101 / PAO1)).